A 149-amino-acid polypeptide reads, in one-letter code: Secreted RxLR effector protein 17 (149 aa).

Positions 1 to 24 are cleaved as a signal peptide; that stretch reads MRLFYFSAMSVIGLLARNNMVVVA. The RxLR-dEER motif lies at 52-78; that stretch reads RSLRTREKDIQDSTVAKDDAIKVEEDR.

This sequence belongs to the RxLR effector family.

It localises to the secreted. It is found in the host cytoplasm. The protein localises to the host nucleus. Functionally, effector that acts as a broad suppressor of cell death to interrupt plant immunity. Inhibits cell death induced by cell death-inducing proteins, including the PAMP elicitor INF1 from P.infestans. In Plasmopara viticola (Downy mildew of grapevine), this protein is Secreted RxLR effector protein 17.